The chain runs to 97 residues: uncharacterized protein (97 aa).

It to B.licheniformis xpaL1 and to B.subtilis XhlA.

This is an uncharacterized protein from Bacillus licheniformis.